The following is a 44-amino-acid chain: Conotoxin Sr5.5 (44 aa).

The N-terminal stretch at 1–19 (MRCLPVFVILLLLIASAPS) is a signal peptide. The propeptide occupies 20–29 (VDDNAKGTQH).

The protein belongs to the conotoxin T superfamily. In terms of processing, contains 2 disulfide bonds that can be either 'C1-C3, C2-C4' or 'C1-C4, C2-C3', since these disulfide connectivities have been observed for conotoxins with cysteine framework V (for examples, see AC P0DQQ7 and AC P81755). In terms of tissue distribution, expressed by the venom duct.

The protein resides in the secreted. This chain is Conotoxin Sr5.5, found in Conus spurius (Alphabet cone).